Here is a 670-residue protein sequence, read N- to C-terminus: Acetyl-coenzyme A synthetase (670 aa).

CoA-binding positions include arginine 211–lysine 214 and threonine 329. Residues glycine 404–proline 406, aspartate 428–threonine 433, aspartate 519, and arginine 534 contribute to the ATP site. A CoA-binding site is contributed by serine 542. Arginine 545 lines the ATP pocket. Arginine 603 contacts CoA.

The protein belongs to the ATP-dependent AMP-binding enzyme family.

The enzyme catalyses acetate + ATP + CoA = acetyl-CoA + AMP + diphosphate. This chain is Acetyl-coenzyme A synthetase (facA), found in Emericella nidulans (strain FGSC A4 / ATCC 38163 / CBS 112.46 / NRRL 194 / M139) (Aspergillus nidulans).